The chain runs to 281 residues: NADPH-dependent 7-cyano-7-deazaguanine reductase (281 aa).

Residue I86 to S88 participates in substrate binding. S88–K89 serves as a coordination point for NADPH. C189 functions as the Thioimide intermediate in the catalytic mechanism. D196 functions as the Proton donor in the catalytic mechanism. Residue H228–E229 coordinates substrate. Residue R257–G258 coordinates NADPH.

Belongs to the GTP cyclohydrolase I family. QueF type 2 subfamily. In terms of assembly, homodimer.

It localises to the cytoplasm. The enzyme catalyses 7-aminomethyl-7-carbaguanine + 2 NADP(+) = 7-cyano-7-deazaguanine + 2 NADPH + 3 H(+). It functions in the pathway tRNA modification; tRNA-queuosine biosynthesis. In terms of biological role, catalyzes the NADPH-dependent reduction of 7-cyano-7-deazaguanine (preQ0) to 7-aminomethyl-7-deazaguanine (preQ1). This is NADPH-dependent 7-cyano-7-deazaguanine reductase from Mannheimia succiniciproducens (strain KCTC 0769BP / MBEL55E).